We begin with the raw amino-acid sequence, 26 residues long: Phospholipase A2 homolog A1 (26 aa).

Post-translationally, contains 7 disulfide bonds. Expressed by the venom gland.

The protein localises to the secreted. In Micrurus pyrrhocryptus (Coral snake), this protein is Phospholipase A2 homolog A1.